We begin with the raw amino-acid sequence, 80 residues long: UPF0291 protein EF_1580 (80 aa).

The tract at residues 60–80 (TDVTPEKLKKIQREKGLHNRK) is disordered. The span at 63–80 (TPEKLKKIQREKGLHNRK) shows a compositional bias: basic and acidic residues.

It belongs to the UPF0291 family.

The protein localises to the cytoplasm. The polypeptide is UPF0291 protein EF_1580 (Enterococcus faecalis (strain ATCC 700802 / V583)).